A 238-amino-acid polypeptide reads, in one-letter code: Ribonuclease 3 (238 aa).

The region spanning 11 to 136 is the RNase III domain; sequence RARLEAAIGY…LIAAIYLDGG (126 aa). E49 provides a ligand contact to Mg(2+). Residue D53 is part of the active site. Positions 122 and 125 each coordinate Mg(2+). E125 is a catalytic residue. The DRBM domain maps to 161–230; sequence DAKTELQEWA…AMKLLEREGV (70 aa).

The protein belongs to the ribonuclease III family. In terms of assembly, homodimer. It depends on Mg(2+) as a cofactor.

It is found in the cytoplasm. It carries out the reaction Endonucleolytic cleavage to 5'-phosphomonoester.. Functionally, digests double-stranded RNA. Involved in the processing of primary rRNA transcript to yield the immediate precursors to the large and small rRNAs (23S and 16S). Processes some mRNAs, and tRNAs when they are encoded in the rRNA operon. Processes pre-crRNA and tracrRNA of type II CRISPR loci if present in the organism. This is Ribonuclease 3 from Rhizobium meliloti (strain 1021) (Ensifer meliloti).